The chain runs to 501 residues: Envelope glycoprotein C homolog (501 aa).

An N-terminal signal peptide occupies residues 1–27 (MLTPRVLRALGWTGLFFLLLSPSNVLG). Over 28–465 (ASLSRDLETP…DATPSARGTP (438 aa)) the chain is Virion surface. N-linked (GlcNAc...) asparagine; by host glycosylation is present at N46. The segment at 53 to 86 (PLTEVPHAPSTESVSTNSESTNEHTITETTGKNA) is disordered. The segment covering 62–72 (STESVSTNSES) has biased composition (low complexity). N91, N100, N120, N212, N354, N400, and N429 each carry an N-linked (GlcNAc...) asparagine; by host glycan. The Ig-like domain occupies 258 to 356 (PASVDVLAPP…GDMISTTNAT (99 aa)). A helical membrane pass occupies residues 466 to 492 (MVITVTAVLGLAVILGMGIIMTALCLY). Residues 493–501 (NSTRKNIRL) are Cytoplasmic-facing.

It belongs to the herpesviridae glycoprotein C family.

The protein resides in the secreted. It localises to the host cell membrane. Its function is as follows. May play an immunoevasive role in the pathogenesis of Marek's disease. It is a candidate for causing the early-stage immunosuppression that occurs after MDHV infection. The protein is Envelope glycoprotein C homolog (gC) of Gallus gallus (Chicken).